Consider the following 243-residue polypeptide: Venom nerve growth factor 1 (243 aa).

A signal peptide spans 1–18 (MSMLCYTLIIAFLIGIWA). Residues 19–125 (VPKSEDNAPL…ALNRNIRAKR (107 aa)) constitute a propeptide that is removed on maturation. Disulfide bonds link Cys139-Cys204, Cys182-Cys232, and Cys192-Cys234. Asn148 carries an N-linked (GlcNAc...) asparagine glycan.

Belongs to the NGF-beta family. As to quaternary structure, homodimer; non-covalently linked. As to expression, expressed by the venom gland.

It localises to the secreted. Its function is as follows. Nerve growth factor is important for the development and maintenance of the sympathetic and sensory nervous systems. It stimulates division and differentiation of sympathetic and embryonic sensory neurons as well as basal forebrain cholinergic neurons in the brain. Its relevance in the snake venom is not clear. However, it has been shown to inhibit metalloproteinase-dependent proteolysis of platelet glycoprotein Ib alpha, suggesting a metalloproteinase inhibition to prevent metalloprotease autodigestion and/or protection against prey proteases. Binds a lipid between the two protein chains in the homodimer. The lipid-bound form promotes histamine relase from mouse mast cells, contrary to the lipid-free form. The polypeptide is Venom nerve growth factor 1 (Naja sputatrix (Malayan spitting cobra)).